The chain runs to 74 residues: Amphipathic peptide CT1 (74 aa).

The first 23 residues, 1-23 (MKTQIVILFISMIMLQMFVQIEG), serve as a signal peptide directing secretion. V37 carries the valine amide modification. Residues 41–74 (GLRNLDDLDDLDLDHLFDSDVSDADLRLLKQMFR) constitute a propeptide that is removed on maturation.

The protein belongs to the non-disulfide-bridged peptide (NDBP) superfamily. Short antimicrobial peptide (group 4) family. Expressed by the venom gland.

It is found in the secreted. Its subcellular location is the target cell membrane. Its function is as follows. Antimicrobial peptide that is rapidly bactericidal against Gram-positive bacteria (MIC=12.5 ug/ml against S.aureus, and MIC=100 ug/ml against M.luteus). Is also active against clinical antibiotics-resistant bacterial strains. This is Amphipathic peptide CT1 from Scorpiops tibetanus (Scorpion).